We begin with the raw amino-acid sequence, 208 residues long: Large ribosomal subunit protein uL4 (208 aa).

The segment at 46–84 is disordered; it reads QGTHKAKTRAEVRGGGRKPFRQKGTGNARQGSTRSPLMI. Residues 69-80 show a composition bias toward polar residues; it reads GTGNARQGSTRS.

The protein belongs to the universal ribosomal protein uL4 family. Part of the 50S ribosomal subunit.

Its function is as follows. One of the primary rRNA binding proteins, this protein initially binds near the 5'-end of the 23S rRNA. It is important during the early stages of 50S assembly. It makes multiple contacts with different domains of the 23S rRNA in the assembled 50S subunit and ribosome. Functionally, forms part of the polypeptide exit tunnel. In Chlorobium limicola (strain DSM 245 / NBRC 103803 / 6330), this protein is Large ribosomal subunit protein uL4.